The sequence spans 328 residues: GMP reductase (328 aa).

Cysteine 176 acts as the Thioimidate intermediate in catalysis. 205–228 contributes to the NADP(+) binding site; the sequence is IIADGGIRTHGDIAKSIRFGASMI.

The protein belongs to the IMPDH/GMPR family. GuaC type 2 subfamily.

It catalyses the reaction IMP + NH4(+) + NADP(+) = GMP + NADPH + 2 H(+). Functionally, catalyzes the irreversible NADPH-dependent deamination of GMP to IMP. It functions in the conversion of nucleobase, nucleoside and nucleotide derivatives of G to A nucleotides, and in maintaining the intracellular balance of A and G nucleotides. In Streptococcus pneumoniae serotype 19F (strain G54), this protein is GMP reductase.